We begin with the raw amino-acid sequence, 282 residues long: Biotin synthase (282 aa).

The region spanning 1 to 228 is the Radical SAM core domain; it reads MQEIFLCSIS…NARLMVAGGR (228 aa). 3 residues coordinate [4Fe-4S] cluster: cysteine 17, cysteine 21, and cysteine 24. [2Fe-2S] cluster is bound by residues cysteine 61, cysteine 96, cysteine 154, and arginine 221.

This sequence belongs to the radical SAM superfamily. Biotin synthase family. Homodimer. It depends on [4Fe-4S] cluster as a cofactor. The cofactor is [2Fe-2S] cluster.

It catalyses the reaction (4R,5S)-dethiobiotin + (sulfur carrier)-SH + 2 reduced [2Fe-2S]-[ferredoxin] + 2 S-adenosyl-L-methionine = (sulfur carrier)-H + biotin + 2 5'-deoxyadenosine + 2 L-methionine + 2 oxidized [2Fe-2S]-[ferredoxin]. Its pathway is cofactor biosynthesis; biotin biosynthesis; biotin from 7,8-diaminononanoate: step 2/2. Its function is as follows. Catalyzes the conversion of dethiobiotin (DTB) to biotin by the insertion of a sulfur atom into dethiobiotin via a radical-based mechanism. This chain is Biotin synthase, found in Helicobacter pylori (strain J99 / ATCC 700824) (Campylobacter pylori J99).